Here is a 202-residue protein sequence, read N- to C-terminus: Small ribosomal subunit protein uS4c (202 aa).

Positions 90-153 constitute an S4 RNA-binding domain; it reads MRLDNIIFRL…KSQAIISKNI (64 aa).

Belongs to the universal ribosomal protein uS4 family. As to quaternary structure, part of the 30S ribosomal subunit. Contacts protein S5. The interaction surface between S4 and S5 is involved in control of translational fidelity.

The protein localises to the plastid. The protein resides in the chloroplast. Its function is as follows. One of the primary rRNA binding proteins, it binds directly to 16S rRNA where it nucleates assembly of the body of the 30S subunit. With S5 and S12 plays an important role in translational accuracy. This Splachnum sphaericum (Pinkstink dung moss) protein is Small ribosomal subunit protein uS4c (rps4).